We begin with the raw amino-acid sequence, 560 residues long: MFARMSDLHVLLLMALVGKTACGFSLMSLLESLDPDWTPDQYDYSYEDYNQEENTSSTLTHAENPDWYYTEDQADPCQPNPCEHGGDCLVHGSTFTCSCLAPFSGNKCQKVQNTCKDNPCGRGQCLITQSPPYYRCVCKHPYTGPSCSQVVPVCRPNPCQNGATCSRHKRRSKFTCACPDQFKGKFCEIGSDDCYVGDGYSYRGKMNRTVNQHACLYWNSHLLLQENYNMFMEDAETHGIGEHNFCRNPDADEKPWCFIKVTNDKVKWEYCDVSACSAQDVAYPEESPTEPSTKLPGFDSCGKTEIAERKIKRIYGGFKSTAGKHPWQASLQSSLPLTISMPQGHFCGGALIHPCWVLTAAHCTDIKTRHLKVVLGDQDLKKEEFHEQSFRVEKIFKYSHYNERDEIPHNDIALLKLKPVDGHCALESKYVKTVCLPDGSFPSGSECHISGWGVTETGKGSRQLLDAKVKLIANTLCNSRQLYDHMIDDSMICAGNLQKPGQDTCQGDSGGPLTCEKDGTYYVYGIVSWGLECGKRPGVYTQVTKFLNWIKATIKSESGF.

An N-terminal signal peptide occupies residues 1 to 23; it reads MFARMSDLHVLLLMALVGKTACG. A glycan (N-linked (GlcNAc...) asparagine) is linked at N54. 3 EGF-like domains span residues 73–109, 111–148, and 150–188; these read QADP…NKCQ, VQNT…PSCS, and VVPV…KFCE. Disulfide bonds link C77-C88, C82-C97, C99-C108, C115-C125, C120-C136, C138-C147, C154-C165, C159-C176, C178-C187, C194-C276, C215-C257, C246-C271, C301-C435, C347-C363, C355-C424, C447-C515, C477-C493, and C505-C533. A Kringle domain is found at 193-276; that stretch reads DCYVGDGYSY…KWEYCDVSAC (84 aa). N-linked (GlcNAc...) asparagine glycosylation is present at N207. The region spanning 314 to 555 is the Peptidase S1 domain; that stretch reads IYGGFKSTAG…FLNWIKATIK (242 aa). Active-site charge relay system residues include H362 and D411. The active-site Charge relay system is the S509.

The protein belongs to the peptidase S1 family. Heterodimer; disulfide-linked. Heterodimer of a 50 kDa heavy and a 27 kDa light chain linked by a disulfide bond. Proteolytic cleavage at Gly-23 or Met-27 can give rise to the 50 kDa heavy chain (HC) and cleavage at Arg-313 or Lys-319 can give rise to the 27 kDa light chain (LC). The HC can undergo further proteolytic cleavage giving rise to a 26 kDa fragment. The LC can undergo further proteolytic cleavage at Arg-313 leading to a 17-kDa fragment and at Arg-480 leading to a 8-kDa fragment. In terms of tissue distribution, ubiquitously expressed.

It is found in the secreted. Cleaves the alpha-chain at multiple sites and the beta-chain between 'Lys-53' and 'Lys-54' but not the gamma-chain of fibrinogen and therefore does not initiate the formation of the fibrin clot and does not cause the fibrinolysis directly. It does not cleave (activate) prothrombin and plasminogen but converts the inactive single chain urinary plasminogen activator (pro-urokinase) to the active two chain form. Activates coagulation factor VII. May function as a tumor suppressor negatively regulating cell proliferation and cell migration. This is Factor VII-activating protease from Homo sapiens (Human).